The chain runs to 247 residues: MYYSIKLRASRDGKHLSGGERIVLKDKIEEAVNQLYRKAEPKDPDEINIKIESIKEKPLVIKSSLKIENIICEDYKSSNQIALEILKRSTGIPVERLKELIDLVHTGSAPDGSNMRGAMIVNQKGERIELDHFRGIRTTTVDFLDRDKILKKLVKKGYTERTVDALCLTTKNMLYPDMIAEYCISDEPDYITGYVSTKDFYYRITPLKSEGNPKGGRIYFVRNSIDLQDFYRFLQEKPVLIEDVGID.

The protein belongs to the BioW family. In terms of assembly, homodimer. It depends on Mg(2+) as a cofactor.

It carries out the reaction heptanedioate + ATP + CoA = 6-carboxyhexanoyl-CoA + AMP + diphosphate. The protein operates within metabolic intermediate metabolism; pimeloyl-CoA biosynthesis; pimeloyl-CoA from pimelate: step 1/1. In terms of biological role, catalyzes the transformation of pimelate into pimeloyl-CoA with concomitant hydrolysis of ATP to AMP. The sequence is that of 6-carboxyhexanoate--CoA ligase from Persephonella marina (strain DSM 14350 / EX-H1).